A 144-amino-acid polypeptide reads, in one-letter code: UPF0178 protein Exig_1155 (144 aa).

The tract at residues 110-144 is disordered; the sequence is IRRAGGRTKGPKKRTRQEDASFEQSFSRLLTEKTD. Positions 113–124 are enriched in basic residues; it reads AGGRTKGPKKRT.

The protein belongs to the UPF0178 family.

In Exiguobacterium sibiricum (strain DSM 17290 / CCUG 55495 / CIP 109462 / JCM 13490 / 255-15), this protein is UPF0178 protein Exig_1155.